Reading from the N-terminus, the 317-residue chain is Beta-ketoacyl-[acyl-carrier-protein] synthase III (317 aa).

Residues Cys-112 and His-244 contribute to the active site. The interval 245–249 (QANLR) is ACP-binding. Asn-274 is an active-site residue.

It belongs to the thiolase-like superfamily. FabH family. Homodimer.

It is found in the cytoplasm. It carries out the reaction malonyl-[ACP] + acetyl-CoA + H(+) = 3-oxobutanoyl-[ACP] + CO2 + CoA. Its pathway is lipid metabolism; fatty acid biosynthesis. Catalyzes the condensation reaction of fatty acid synthesis by the addition to an acyl acceptor of two carbons from malonyl-ACP. Catalyzes the first condensation reaction which initiates fatty acid synthesis and may therefore play a role in governing the total rate of fatty acid production. Possesses both acetoacetyl-ACP synthase and acetyl transacylase activities. Its substrate specificity determines the biosynthesis of branched-chain and/or straight-chain of fatty acids. This is Beta-ketoacyl-[acyl-carrier-protein] synthase III from Shigella sonnei (strain Ss046).